Reading from the N-terminus, the 218-residue chain is MTDIRDTDALFALADRVTGFMPADEGRTLYETAVRYLGDGVGVEIGTYCGKSTVLLGAAARQTGGVVFTVDHHHGSEEHQPGWEYHDPSLVDPVTGLFDTLPRLRHTLDEADLYDHVVAVVGKSAVVARGWRTPLRFLFIDGGHTEEAAQRDFDGWARWVEVGGALVIHDVFPDPKDGGQAPFHIYQRALNTGDFREVNAYGSMRVLERTSGIAGQPL.

S-adenosyl-L-methionine contacts are provided by F20, G46, S52, D71, G75, and S124. D141 is a Mg(2+) binding site. H144 (proton acceptor) is an active-site residue. R151 is an S-adenosyl-L-methionine binding site. Mg(2+) is bound by residues H169 and D170.

Belongs to the methyltransferase superfamily. Homodimer. It depends on Mg(2+) as a cofactor.

The enzyme catalyses 3,3'-di-O-methyl-4alpha-mannobiose + S-adenosyl-L-methionine = 1,3,3'-tri-O-methyl-4alpha-mannobiose + S-adenosyl-L-homocysteine + H(+). With respect to regulation, inhibited by EDTA. In terms of biological role, involved in the biosynthesis of 3-O-methylmannose polysaccharides (MMP), which are intracellular polymethylated polysaccharides implicated in the modulation of fatty acid metabolism in non-tuberculous mycobacteria. Specifically methylates the 1-OH position of 3,3'-di-O-methyl-4alpha-mannobiose, a probable early precursor of MMP, yielding the reducing end dimannoside of MMP. The protein is MMP 1-O-methyltransferase of Mycolicibacterium hassiacum (strain DSM 44199 / CIP 105218 / JCM 12690 / 3849) (Mycobacterium hassiacum).